We begin with the raw amino-acid sequence, 503 residues long: Aromatase 1 (503 aa).

Position 437 (C437) interacts with heme.

Belongs to the cytochrome P450 family. Requires heme as cofactor.

It is found in the membrane. It catalyses the reaction testosterone + 3 reduced [NADPH--hemoprotein reductase] + 3 O2 = 17beta-estradiol + formate + 3 oxidized [NADPH--hemoprotein reductase] + 4 H2O + 4 H(+). The enzyme catalyses androst-4-ene-3,17-dione + 3 reduced [NADPH--hemoprotein reductase] + 3 O2 = estrone + formate + 3 oxidized [NADPH--hemoprotein reductase] + 4 H2O + 4 H(+). Its function is as follows. Catalyzes the formation of aromatic C18 estrogens from C19 androgens. This Sus scrofa (Pig) protein is Aromatase 1 (CYP19A1).